A 145-amino-acid polypeptide reads, in one-letter code: MRCLGIDYGTRRIGLAYGDELGVATPLPALVEADPAKRWQSLLATARQRRVTDLVVGHPLNMDDTAGPKAKEAEAVAARLRTELAGVDVHLVDERLTSYEAEATISKTQRRAVRASGVIDSRAATLILQDFLDQRFPPPLPHPAE.

This sequence belongs to the YqgF nuclease family.

It localises to the cytoplasm. Functionally, could be a nuclease involved in processing of the 5'-end of pre-16S rRNA. The sequence is that of Putative pre-16S rRNA nuclease from Opitutus terrae (strain DSM 11246 / JCM 15787 / PB90-1).